We begin with the raw amino-acid sequence, 306 residues long: 5'-hydroxyaverantin dehydrogenase (306 aa).

NADP(+)-binding residues include S25, I27, Q48, K52, and D73. Residue S173 is the Proton donor of the active site. 4 residues coordinate NADP(+): Y187, K191, V220, and T222. Catalysis depends on Y187, which acts as the Proton acceptor. The Lowers pKa of active site Tyr role is filled by K191.

The protein belongs to the short-chain dehydrogenases/reductases (SDR) family. Homodimer.

It is found in the cytoplasm. The protein localises to the cytosol. The catalysed reaction is (1'S,5'S)-5'-hydroxyaverantin + NAD(+) = (S)-5'-oxoaverantin + NADH + H(+). It carries out the reaction (1'S,5'R)-5'-hydroxyaverantin + NAD(+) = (S)-5'-oxoaverantin + NADH + 2 H(+). The protein operates within mycotoxin biosynthesis. In terms of biological role, 5'-hydroxyaverantin dehydrogenase; part of the fragmented gene cluster that mediates the biosynthesis of dothistromin (DOTH), a polyketide toxin very similar in structure to the aflatoxin precursor, versicolorin B. The first step of the pathway is the conversion of acetate to norsolorinic acid (NOR) and requires the fatty acid synthase subunits hexA and hexB, as well as the polyketide synthase pksA. PksA combines a hexanoyl starter unit and 7 malonyl-CoA extender units to synthesize the precursor NOR. The hexanoyl starter unit is provided to the acyl-carrier protein (ACP) domain by the fungal fatty acid synthase hexA/hexB. The second step is the conversion of NOR to averantin (AVN) and requires the norsolorinic acid ketoreductase nor1, which catalyzes the dehydration of norsolorinic acid to form (1'S)-averantin. The cytochrome P450 monooxygenase avnA then catalyzes the hydroxylation of AVN to 5'hydroxyaverantin (HAVN). The next step is performed by adhA that transforms HAVN to averufin (AVF). Averufin might then be converted to hydroxyversicolorone by cypX and avfA. Hydroxyversicolorone is further converted versiconal hemiacetal acetate (VHA) by moxY. VHA is then the substrate for the versiconal hemiacetal acetate esterase est1 to yield versiconal (VAL). Versicolorin B synthase vbsA then converts VAL to versicolorin B (VERB) by closing the bisfuran ring. Then, the activity of the versicolorin B desaturase verB leads to versicolorin A (VERA). DotB, a predicted chloroperoxidase, may perform epoxidation of the A-ring of VERA. Alternatively, a cytochrome P450, such as cypX or avnA could catalyze this step. It is also possible that another, uncharacterized, cytochrome P450 enzyme is responsible for this step. Opening of the epoxide could potentially be achieved by the epoxide hydrolase epoA. However, epoA seems not to be required for DOTH biosynthesis, but other epoxide hydrolases may have the ability to complement this hydrolysis. Alternatively, opening of the epoxide ring could be achieved non-enzymatically. The next step is the deoxygenation of ring A to yield the 5,8-dihydroxyanthraquinone which is most likely catalyzed by the NADPH dehydrogenase encoded by ver1. The last stages of DOTH biosynthesis are proposed to involve hydroxylation of the bisfuran. OrdB and norB might have oxidative roles here. An alternative possibility is that cytochrome P450 monoogenases such as avnA and cypX might perform these steps in addition to previously proposed steps. This chain is 5'-hydroxyaverantin dehydrogenase, found in Dothistroma septosporum (strain NZE10 / CBS 128990) (Red band needle blight fungus).